Reading from the N-terminus, the 248-residue chain is Type II restriction enzyme XhoI (248 aa).

It belongs to the XhoI type II restriction endonuclease family.

The enzyme catalyses Endonucleolytic cleavage of DNA to give specific double-stranded fragments with terminal 5'-phosphates.. A P subtype restriction enzyme that recognizes the double-stranded sequence 5'-CTCGAG-3' and cleaves after C-1. In Xanthomonas vasicola, this protein is Type II restriction enzyme XhoI.